Consider the following 305-residue polypeptide: Sulfate adenylyltransferase subunit 2 (305 aa).

The protein belongs to the PAPS reductase family. CysD subfamily. As to quaternary structure, heterodimer composed of CysD, the smaller subunit, and CysN.

The enzyme catalyses sulfate + ATP + H(+) = adenosine 5'-phosphosulfate + diphosphate. The protein operates within sulfur metabolism; hydrogen sulfide biosynthesis; sulfite from sulfate: step 1/3. Its function is as follows. With CysN forms the ATP sulfurylase (ATPS) that catalyzes the adenylation of sulfate producing adenosine 5'-phosphosulfate (APS) and diphosphate, the first enzymatic step in sulfur assimilation pathway. APS synthesis involves the formation of a high-energy phosphoric-sulfuric acid anhydride bond driven by GTP hydrolysis by CysN coupled to ATP hydrolysis by CysD. The protein is Sulfate adenylyltransferase subunit 2 of Pseudomonas aeruginosa (strain LESB58).